We begin with the raw amino-acid sequence, 864 residues long: Leucine--tRNA ligase (864 aa).

The short motif at proline 42–histidine 52 is the 'HIGH' region element. Residues lysine 624–serine 628 carry the 'KMSKS' region motif. Lysine 627 serves as a coordination point for ATP.

It belongs to the class-I aminoacyl-tRNA synthetase family.

It is found in the cytoplasm. It catalyses the reaction tRNA(Leu) + L-leucine + ATP = L-leucyl-tRNA(Leu) + AMP + diphosphate. The polypeptide is Leucine--tRNA ligase (Burkholderia cenocepacia (strain ATCC BAA-245 / DSM 16553 / LMG 16656 / NCTC 13227 / J2315 / CF5610) (Burkholderia cepacia (strain J2315))).